Here is a 314-residue protein sequence, read N- to C-terminus: A-kinase anchor protein 7 isoform gamma (314 aa).

The disordered stretch occupies residues 1–46 (MPFAAVDIQDDCGSPDVPQANPKRSKEEEEDRGDKNDHVKKRKKAK). A compositionally biased stretch (basic and acidic residues) spans 24 to 37 (RSKEEEEDRGDKND). AMP is bound by residues threonine 95 and 185–187 (HLT). CMP is bound by residues threonine 95 and 185–187 (HLT). Positions 260 to 314 (AELVRLSKRLVENAVLKAVQQYLEETQNKKQPGEGNSTKAEEGDRNGDGSDNNRK) are PKA-RII-alpha subunit binding domain. The RI-alpha-binding stretch occupies residues 261–285 (ELVRLSKRLVENAVLKAVQQYLEET). Residues 262–275 (LVRLSKRLVENAVL) form an RII-binding region. Positions 281–314 (YLEETQNKKQPGEGNSTKAEEGDRNGDGSDNNRK) are disordered. The segment covering 298 to 314 (KAEEGDRNGDGSDNNRK) has biased composition (basic and acidic residues).

As to quaternary structure, binds cAMP-dependent protein kinase (PKA). Interacts with PRKCA; only the cytoplasmic form is capable of interacting with PRKCA. Expressed in oocytes.

The protein resides in the nucleus. Its subcellular location is the cytoplasm. Probably targets cAMP-dependent protein kinase (PKA) to the cellular membrane or cytoskeletal structures. The membrane-associated form reduces epithelial sodium channel (ENaC) activity, whereas the free cytoplasmic form may negatively regulate ENaC channel feedback inhibition by intracellular sodium. The chain is A-kinase anchor protein 7 isoform gamma from Mus musculus (Mouse).